A 133-amino-acid chain; its full sequence is uncharacterized protein (133 aa).

The FAS1 domain maps to methionine 1–isoleucine 130.

This is an uncharacterized protein from Synechocystis sp. (strain ATCC 27184 / PCC 6803 / Kazusa).